We begin with the raw amino-acid sequence, 156 residues long: Small ribosomal subunit protein uS7 (156 aa).

The protein belongs to the universal ribosomal protein uS7 family. In terms of assembly, part of the 30S ribosomal subunit. Contacts proteins S9 and S11.

In terms of biological role, one of the primary rRNA binding proteins, it binds directly to 16S rRNA where it nucleates assembly of the head domain of the 30S subunit. Is located at the subunit interface close to the decoding center, probably blocks exit of the E-site tRNA. In Deinococcus radiodurans (strain ATCC 13939 / DSM 20539 / JCM 16871 / CCUG 27074 / LMG 4051 / NBRC 15346 / NCIMB 9279 / VKM B-1422 / R1), this protein is Small ribosomal subunit protein uS7.